A 304-amino-acid polypeptide reads, in one-letter code: D-tagatose-1-phosphate kinase (304 aa).

The Proton acceptor role is filled by D250.

Belongs to the carbohydrate kinase PfkB family. It depends on Mg(2+) as a cofactor.

The enzyme catalyses alpha-D-tagatopyranose 1-phosphate + ATP = D-tagatofuranose 1,6-bisphosphate + ADP + H(+). The protein operates within carbohydrate degradation. With respect to regulation, activity is inhibited by tagatose-6-phosphate and fructose-6-phosphate. Its function is as follows. Kinase involved in a D-tagatose catabolic pathway. Catalyzes the phosphorylation of D-tagatose-1-phosphate (Tag-1P) to D-tagatose-1,6-bisphosphate. Can also use D-fructose-1-phosphate, with 40-fold lower catalytic efficiency, but not tagatose-6-phosphate or fructose-6-phosphate. The substrate, which occurs in a pyranose form in solution, may undergo a change to the furanose conformation after binding to the enzyme, in order to permit phosphorylation at C-6. This chain is D-tagatose-1-phosphate kinase, found in Bacillus licheniformis (strain ATCC 14580 / DSM 13 / JCM 2505 / CCUG 7422 / NBRC 12200 / NCIMB 9375 / NCTC 10341 / NRRL NRS-1264 / Gibson 46).